A 315-amino-acid polypeptide reads, in one-letter code: tRNA dimethylallyltransferase (315 aa).

10 to 17 (GPTEVGKT) is a binding site for ATP. A substrate-binding site is contributed by 12–17 (TEVGKT). Residues 35 to 38 (DSMQ) are interaction with substrate tRNA.

The protein belongs to the IPP transferase family. Monomer. Requires Mg(2+) as cofactor.

It carries out the reaction adenosine(37) in tRNA + dimethylallyl diphosphate = N(6)-dimethylallyladenosine(37) in tRNA + diphosphate. Catalyzes the transfer of a dimethylallyl group onto the adenine at position 37 in tRNAs that read codons beginning with uridine, leading to the formation of N6-(dimethylallyl)adenosine (i(6)A). This Geobacillus thermodenitrificans (strain NG80-2) protein is tRNA dimethylallyltransferase.